The sequence spans 198 residues: Ribonuclease HII (198 aa).

The RNase H type-2 domain maps to 10–198 (QLVAGVDEVG…PVKRALGLAS (189 aa)). Residues Asp16, Glu17, and Asp108 each contribute to the a divalent metal cation site.

This sequence belongs to the RNase HII family. It depends on Mn(2+) as a cofactor. Mg(2+) serves as cofactor.

The protein localises to the cytoplasm. The enzyme catalyses Endonucleolytic cleavage to 5'-phosphomonoester.. Its function is as follows. Endonuclease that specifically degrades the RNA of RNA-DNA hybrids. This Escherichia fergusonii (strain ATCC 35469 / DSM 13698 / CCUG 18766 / IAM 14443 / JCM 21226 / LMG 7866 / NBRC 102419 / NCTC 12128 / CDC 0568-73) protein is Ribonuclease HII.